We begin with the raw amino-acid sequence, 189 residues long: dCTP deaminase (189 aa).

Residues 112 to 117 (KSTYAR), 136 to 138 (TLE), glutamine 157, tyrosine 171, and glutamine 181 contribute to the dCTP site. The active-site Proton donor/acceptor is the glutamate 138.

This sequence belongs to the dCTP deaminase family. Homotrimer.

It catalyses the reaction dCTP + H2O + H(+) = dUTP + NH4(+). Its pathway is pyrimidine metabolism; dUMP biosynthesis; dUMP from dCTP (dUTP route): step 1/2. Its function is as follows. Catalyzes the deamination of dCTP to dUTP. The protein is dCTP deaminase of Xanthomonas campestris pv. campestris (strain 8004).